Consider the following 97-residue polypeptide: RxLR effector protein CRE10 (97 aa).

The N-terminal stretch at 1–21 is a signal peptide; sequence MRLSYILVVVIAVTLQACVCA. The RxLR-dEER signature appears at 48–66; it reads RLLRGVKKRTAEREVQEER.

Belongs to the RxLR effector family.

It is found in the secreted. It localises to the host cell. Effector that is involved in host plant infection. Contributes to virulence during the early infection stage, by inhibiting plant defense responses induced by both PAMP-triggered immunity (PTI) and effector-triggered immunity (ETI). The polypeptide is RxLR effector protein CRE10 (Phytophthora infestans (strain T30-4) (Potato late blight agent)).